The primary structure comprises 374 residues: Ras-related GTP-binding protein B (374 aa).

Met1 is modified (N-acetylmethionine). The span at Met1–Val15 shows a compositional bias: basic and acidic residues. The segment at Met1–Leu30 is disordered. Ser49 and Gly50 together coordinate GTP. GDP-binding residues include Gly50, Ser51, Gly52, Lys53, Thr54, Ser55, Thr69, and Thr75. Positions 52, 53, 54, 55, 69, 75, 126, and 188 each coordinate GTP. GDP is bound by residues His188 and Asp191. Lys203 is covalently cross-linked (Glycyl lysine isopeptide (Lys-Gly) (interchain with G-Cter in ubiquitin)). GDP is bound by residues Leu209 and Ile225. Ile225 lines the GTP pocket. Residues Lys281, Lys291, and Lys305 each participate in a glycyl lysine isopeptide (Lys-Gly) (interchain with G-Cter in ubiquitin) cross-link.

It belongs to the GTR/RAG GTP-binding protein family. Interacts with RRAGC and RRAGD; heterodimerization stabilizes RRAG proteins. The GTP-bound form of RRAGB (in complex with the GDP-bound form of RRAGC or RRAGD) interacts with RPTOR, thereby promoting recruitment of mTORC1 to the lysosomes. Component of the lysosomal folliculin complex (LFC), composed of FLCN, FNIP1 (or FNIP2), RagA/RRAGA or RagB/RRAGB GDP-bound, RagC/RRAGC or RagD/RRAGD GTP-bound, and Ragulator. Interacts with SH3BP4; the interaction with this negative regulator is most probably direct, preferentially occurs with the inactive GDP-bound form of RRAGB, is negatively regulated by amino acids and prevents interaction with RPTOR. Interacts with the GATOR1 complex; inactivates RRAGB. The Rag heterodimer interacts with SLC38A9; the probable amino acid sensor. Interacts with SESN1, SESN2 and SESN3.

It localises to the cytoplasm. It is found in the lysosome membrane. The enzyme catalyses GTP + H2O = GDP + phosphate + H(+). The activation of GTP-binding proteins is generally mediated by a guanine exchange factor (GEF), while inactivation through hydrolysis of bound GTP is catalyzed by a GTPase activating protein (GAP). The Ragulator complex functions as a GEF and promotes the active GTP-bound form. The GATOR1 complex functions as a GAP and stimulates RRAGB GTPase activity to turn it into its inactive GDP-bound form, preventing mTORC1 recruitment and activation. Guanine nucleotide-binding protein that plays a crucial role in the cellular response to amino acid availability through regulation of the mTORC1 signaling cascade. Forms heterodimeric Rag complexes with RagC/RRAGC or RagD/RRAGD and cycles between an inactive GDP-bound and an active GTP-bound form: RagB/RRAGB is in its active form when GTP-bound RagB/RRAGB forms a complex with GDP-bound RagC/RRAGC (or RagD/RRAGD) and in an inactive form when GDP-bound RagB/RRAGB heterodimerizes with GTP-bound RagC/RRAGC (or RagD/RRAGD). In its GTP-bound active form, promotes the recruitment of mTORC1 to the lysosomes and its subsequent activation by the GTPase RHEB. Involved in the RCC1/Ran-GTPase pathway. The polypeptide is Ras-related GTP-binding protein B (Mus musculus (Mouse)).